We begin with the raw amino-acid sequence, 431 residues long: Glutamate-1-semialdehyde 2,1-aminomutase (431 aa).

An N6-(pyridoxal phosphate)lysine modification is found at Lys265.

Belongs to the class-III pyridoxal-phosphate-dependent aminotransferase family. HemL subfamily. In terms of assembly, homodimer. Pyridoxal 5'-phosphate is required as a cofactor.

Its subcellular location is the cytoplasm. It carries out the reaction (S)-4-amino-5-oxopentanoate = 5-aminolevulinate. Its pathway is porphyrin-containing compound metabolism; protoporphyrin-IX biosynthesis; 5-aminolevulinate from L-glutamyl-tRNA(Glu): step 2/2. The chain is Glutamate-1-semialdehyde 2,1-aminomutase from Vibrio vulnificus (strain CMCP6).